The following is a 271-amino-acid chain: Orotidine 5'-phosphate decarboxylase (271 aa).

The active-site Proton donor is the Lys-95.

This sequence belongs to the OMP decarboxylase family. Type 2 subfamily.

It carries out the reaction orotidine 5'-phosphate + H(+) = UMP + CO2. It participates in pyrimidine metabolism; UMP biosynthesis via de novo pathway; UMP from orotate: step 2/2. The sequence is that of Orotidine 5'-phosphate decarboxylase from Aromatoleum aromaticum (strain DSM 19018 / LMG 30748 / EbN1) (Azoarcus sp. (strain EbN1)).